A 256-amino-acid chain; its full sequence is DNA repair protein RecO (256 aa).

The protein belongs to the RecO family.

Functionally, involved in DNA repair and RecF pathway recombination. This is DNA repair protein RecO from Rhizobium leguminosarum bv. trifolii (strain WSM2304).